We begin with the raw amino-acid sequence, 73 residues long: Small ribosomal subunit protein bS18B (73 aa).

This sequence belongs to the bacterial ribosomal protein bS18 family. Part of the 30S ribosomal subunit. Forms a tight heterodimer with protein bS6.

Its function is as follows. Binds as a heterodimer with protein bS6 to the central domain of the 16S rRNA, where it helps stabilize the platform of the 30S subunit. In Frankia alni (strain DSM 45986 / CECT 9034 / ACN14a), this protein is Small ribosomal subunit protein bS18B.